The primary structure comprises 92 residues: UPF0250 protein XOO3732 (92 aa).

The protein belongs to the UPF0250 family.

In Xanthomonas oryzae pv. oryzae (strain MAFF 311018), this protein is UPF0250 protein XOO3732.